The following is a 210-amino-acid chain: Cytochrome c biogenesis ATP-binding export protein CcmA (210 aa).

In terms of domain architecture, ABC transporter spans 3-205; the sequence is LHLQAAGLAC…KPSGYRELNL (203 aa). Residue 37–44 coordinates ATP; sequence GPNGSGKT.

Belongs to the ABC transporter superfamily. CcmA exporter (TC 3.A.1.107) family. In terms of assembly, the complex is composed of two ATP-binding proteins (CcmA) and two transmembrane proteins (CcmB).

The protein resides in the cell inner membrane. The catalysed reaction is heme b(in) + ATP + H2O = heme b(out) + ADP + phosphate + H(+). Part of the ABC transporter complex CcmAB involved in the biogenesis of c-type cytochromes; once thought to export heme, this seems not to be the case, but its exact role is uncertain. Responsible for energy coupling to the transport system. The polypeptide is Cytochrome c biogenesis ATP-binding export protein CcmA (Pseudomonas putida (strain ATCC 47054 / DSM 6125 / CFBP 8728 / NCIMB 11950 / KT2440)).